The sequence spans 216 residues: Squamosa promoter-binding-like protein 13 (216 aa).

The interval G32–C110 is disordered. The span at S67–R91 shows a compositional bias: low complexity. The span at G94–P108 shows a compositional bias: gly residues. An SBP-type zinc finger spans residues G107–S184. Positions 110, 115, 132, 135, 151, 154, 158, and 170 each coordinate Zn(2+). The Bipartite nuclear localization signal motif lies at K167–K183. The interval A175 to R216 is disordered. Positions A189 to R203 are enriched in basic and acidic residues. Residues H205–R216 are compositionally biased toward polar residues.

As to expression, ubiquitous.

The protein resides in the nucleus. Functionally, trans-acting factor that binds specifically to the consensus nucleotide sequence 5'-TNCGTACAA-3'. May be involved in panicle development. This is Squamosa promoter-binding-like protein 13 (SPL13) from Oryza sativa subsp. japonica (Rice).